The following is a 431-amino-acid chain: Enolase (431 aa).

(2R)-2-phosphoglycerate is bound at residue Gln168. Residue Glu210 is the Proton donor of the active site. Positions 247, 291, and 318 each coordinate Mg(2+). (2R)-2-phosphoglycerate contacts are provided by Lys343, Arg372, Ser373, and Lys394. Lys343 acts as the Proton acceptor in catalysis.

It belongs to the enolase family. Component of the RNA degradosome, a multiprotein complex involved in RNA processing and mRNA degradation. Requires Mg(2+) as cofactor.

The protein resides in the cytoplasm. The protein localises to the secreted. It is found in the cell surface. The enzyme catalyses (2R)-2-phosphoglycerate = phosphoenolpyruvate + H2O. The protein operates within carbohydrate degradation; glycolysis; pyruvate from D-glyceraldehyde 3-phosphate: step 4/5. Its function is as follows. Catalyzes the reversible conversion of 2-phosphoglycerate (2-PG) into phosphoenolpyruvate (PEP). It is essential for the degradation of carbohydrates via glycolysis. The polypeptide is Enolase (Acinetobacter baumannii (strain SDF)).